Here is a 176-residue protein sequence, read N- to C-terminus: Glyoxalase domain-containing protein RDO1 (176 aa).

The 120-residue stretch at 53–172 (SLDHLVITCH…DNNLIELSSY (120 aa)) folds into the VOC domain. Glu168 acts as the Proton donor/acceptor in catalysis.

Belongs to the glyoxalase I family.

It functions in the pathway secondary metabolite biosynthesis. Its function is as follows. Glyoxalase domain-containing protein; part of the gene cluster that mediates the biosynthesis of itaconic acid and 2-hydroxyparaconate. Cis-aconitate is secreted by the mitochondrial tricarboxylate transporter MTT1. In the cytosol cis-aconitate is converted into trans-aconitate via isomerization by the aconitate-delta-isomerase ADI1. Decarboxylation of trans-aconitate by the trans-aconitate decarboxylase TAD1 then leads then to the production of itaconic acid. The cytochrome P450 monooxygenase CYP3 further converts itaconate to 2-hydroxyparaconate via oxidation of the double bond, leading to a transient epoxide, which can subsequently be lactonized to produce 2-hydroxyparaconate. Secretion of itaconate and possibly 2-hydroxyparaconate into the medium is mediated by the major facilitator ITP1. The glyoxalase domain-containing protein RDO1 is not involved in the biosynthesis of itaconate and 2-hydroxyparaconate, however, it might play a role in the further conversion of 2-hydroxyparaconate to itatartarate. The sequence is that of Glyoxalase domain-containing protein RDO1 from Mycosarcoma maydis (Corn smut fungus).